A 1169-amino-acid polypeptide reads, in one-letter code: Rabankyrin-5 (1169 aa).

Alanine 2 carries the N-acetylalanine modification. A BTB domain is found at 68-130; it reads SDLKIKVGDR…IYTDELEFRE (63 aa). ANK repeat units lie at residues 217–247, 255–284, 288–317, 322–362, and 366–396; these read KTEYPLHKAIKVEREDVVFLYLIEMDSQLPG, NGDLALDLALSRRLESIATTLVSHKADVDM, NGWSLLHKGIQRGDLFASTFLIKNGALVNA, AQET…NPNM, and KGRTPLHLSIMARNDCVFSQLLQCKQLDLEL. Phosphoserine is present on serine 270. An NPF motif is present at residues 421-423; sequence NPF. ANK repeat units lie at residues 490–519, 542–572, 588–617, 621–650, 654–683, 687–716, 724–753, 769–798, 802–832, 836–865, 870–899, 905–934, 938–967, 971–1001, 1005–1037, and 1043–1072; these read WGETPLHTACRHGLANLTAELLQQGANPNL, YLQTPLHMAIAYNHPDVVSVILEQKANALHA, RDQTVLGLALWTGMHTIAAQLLGSGASIND, DGQTLLHMAIQRQDSKSALFLLEHQADINV, DGETALQLAIKHQLPLVVDAICTRGADMSV, KGNPPLWLALASNLEDIASTLVRHGCDATC, CLQTLLHRAVDENNESTACFLIRSGCDVNS, DGQTPLHLAASWGLEETVQCLLEFGANVNA, EGRTPVHVAISNQHSVIIQLLISHPNIELSV, QGLTPFACAMTYKNNKAAEAILKRESGAAE, KGRNFLHVAVQNSDIESVLFLISVQANVNS, SKLTPLHLAVQAGSEIIVRNLLLAGAKVNE, HRQTALHLAAQQDLPTICSVLLENGVDFAA, NGNNALHLAVMHGRLNNIRALLTECTVDAEA, RGQSPLHILGQYGKENAAAIFDLFLECMPEYPL, and EGNTVLLLAYMKGNANLCRAIVRSGVRLGV. The segment at 650–759 is interaction with RHOD and RAB5A; that stretch reads VRTQDGETAL…DVNSPRQPGT (110 aa). The segment at 1104-1164 adopts an FYVE-type zinc-finger fold; the sequence is WCDGSNCYEC…VCNICFDVLT (61 aa). Residues cysteine 1110, cysteine 1113, cysteine 1126, cysteine 1129, cysteine 1134, cysteine 1137, cysteine 1156, and cysteine 1159 each coordinate Zn(2+).

As to quaternary structure, interacts with RAB5A (in GTP-bound form). Interacts with RHOD (independent of GTP-loaded status). Interacts with EHD1. Interacts with VPS26A; the interaction is independent of EHD1 and is indicative for an association with the cargo recognition subcomplex of the retromer complex. As to expression, expressed in kidney proximal tubule epithelial cells; at protein level.

The protein resides in the cytoplasm. It localises to the endosome membrane. The protein localises to the cytoplasmic vesicle. In terms of biological role, proposed effector of Rab5. Binds to phosphatidylinositol 3-phosphate (PI(3)P). Involved in homotypic early endosome fusion and to a lesser extent in heterotypic fusion of chlathrin-coated vesicles with early endosomes. Required for correct endosomal localization. Involved in the internalization and trafficking of activated tyrosine kinase receptors such as PDGFRB. Regulates the subcellular localization of the retromer complex in a EHD1-dependent manner. Involved in endosome-to-Golgi transport and biosynthetic transport to late endosomes and lysosomes indicative for a regulation of retromer complex-mediated retrograde transport. Involved in macropinocytosis; the function is dependent on Rab5-GTP. The polypeptide is Rabankyrin-5 (Ankfy1) (Mus musculus (Mouse)).